The following is a 330-amino-acid chain: MTPNSTGEVPSPIPKGALGLSLALASLIITANLLLALGIAWDRRLRSPPAGCFFLSLLLAGLLTGLALPTLPGLWNQSRRGYWSCLLVYLAPNFSFLSLLANLLLVHGERYMAVLRPLQPPGSIRLALLLTWAGPLLFASLPALGWNHWTPGANCSSQAIFPAPYLYLEVYGLLLPAVGAAAFLSVRVLATAHRQLQDICRLERAVCRDEPSALARALTWRQARAQAGAMLLFGLCWGPYVATLLLSVLAYEQRPPLGPGTLLSLLSLGSASAAAVPVAMGLGDQRYTAPWRAAAQRCLQGLWGRASRDSPGPSIAYHPSSQSSVDLDLN.

Over 1–19 the chain is Extracellular; that stretch reads MTPNSTGEVPSPIPKGALG. Residue Asn-4 is glycosylated (N-linked (GlcNAc...) asparagine). The chain crosses the membrane as a helical span at residues 20 to 40; sequence LSLALASLIITANLLLALGIA. Residues 41-50 lie on the Cytoplasmic side of the membrane; that stretch reads WDRRLRSPPA. A helical transmembrane segment spans residues 51–71; it reads GCFFLSLLLAGLLTGLALPTL. Over 72–85 the chain is Extracellular; it reads PGLWNQSRRGYWSC. Asn-76 carries N-linked (GlcNAc...) asparagine glycosylation. A disulfide bridge links Cys-85 with Cys-155. A helical membrane pass occupies residues 86 to 106; sequence LLVYLAPNFSFLSLLANLLLV. At 107 to 125 the chain is on the cytoplasmic side; that stretch reads HGERYMAVLRPLQPPGSIR. A helical transmembrane segment spans residues 126–146; it reads LALLLTWAGPLLFASLPALGW. Over 147-165 the chain is Extracellular; that stretch reads NHWTPGANCSSQAIFPAPY. A helical transmembrane segment spans residues 166-186; that stretch reads LYLEVYGLLLPAVGAAAFLSV. At 187 to 228 the chain is on the cytoplasmic side; it reads RVLATAHRQLQDICRLERAVCRDEPSALARALTWRQARAQAG. The chain crosses the membrane as a helical span at residues 229 to 249; that stretch reads AMLLFGLCWGPYVATLLLSVL. The Extracellular segment spans residues 250 to 261; the sequence is AYEQRPPLGPGT. The helical transmembrane segment at 262–282 threads the bilayer; that stretch reads LLSLLSLGSASAAAVPVAMGL. The Cytoplasmic portion of the chain corresponds to 283–330; sequence GDQRYTAPWRAAAQRCLQGLWGRASRDSPGPSIAYHPSSQSSVDLDLN. The segment at 309–330 is disordered; the sequence is DSPGPSIAYHPSSQSSVDLDLN. Polar residues predominate over residues 319 to 330; sequence PSSQSSVDLDLN.

It belongs to the G-protein coupled receptor 1 family. As to expression, ubiquitously expressed. Expressed at higher level in spleen and placenta. Expressed at lower level in other tissues. In digestive tissues, it is expressed in stomach, duodenum, ileocecum, ileum, jejunum, ascending colon, transverse colon, descending colon, cecum and liver, but not in esophagus and rectum.

It localises to the cell membrane. Receptor for bile acid. Bile acid-binding induces its internalization, activation of extracellular signal-regulated kinase and intracellular cAMP production. May be involved in the suppression of macrophage functions by bile acids. In Homo sapiens (Human), this protein is G-protein coupled bile acid receptor 1 (GPBAR1).